A 275-amino-acid chain; its full sequence is NH(3)-dependent NAD(+) synthetase (275 aa).

47-54 (GISGGQDS) contributes to the ATP binding site. Asp53 lines the Mg(2+) pocket. A deamido-NAD(+)-binding site is contributed by Arg141. Thr161 serves as a coordination point for ATP. Residue Glu166 participates in Mg(2+) binding. Residues Lys174 and Asp181 each contribute to the deamido-NAD(+) site. ATP-binding residues include Lys190 and Thr212. A deamido-NAD(+)-binding site is contributed by 261-262 (HK).

Belongs to the NAD synthetase family. As to quaternary structure, homodimer.

The enzyme catalyses deamido-NAD(+) + NH4(+) + ATP = AMP + diphosphate + NAD(+) + H(+). Its pathway is cofactor biosynthesis; NAD(+) biosynthesis; NAD(+) from deamido-NAD(+) (ammonia route): step 1/1. In terms of biological role, catalyzes the ATP-dependent amidation of deamido-NAD to form NAD. Uses ammonia as a nitrogen source. In Latilactobacillus sakei subsp. sakei (strain 23K) (Lactobacillus sakei subsp. sakei), this protein is NH(3)-dependent NAD(+) synthetase.